Consider the following 715-residue polypeptide: Metastasis-associated protein MTA1 (715 aa).

One can recognise a BAH domain in the interval 1–164 (MAANMYRVGD…PQQKTLLADK (164 aa)). Residues 165–276 (GEIRVGNRYQ…KAISALVPQG (112 aa)) enclose the ELM2 domain. Lys-182 is covalently cross-linked (Glycyl lysine isopeptide (Lys-Gly) (interchain with G-Cter in ubiquitin)). One can recognise an SANT domain in the interval 283–335 (DEMEEWSASEANLFEEALEKYGKDFTDIQQDFLPWKSLTSIIEYYYMWKTTDR). Position 386 is a phosphoserine (Ser-386). The segment at 393 to 420 (CESCYTTQSYQWYSWGPPNMQCRLCASC) adopts a GATA-type; atypical zinc-finger fold. Residues 437 to 460 (DGERPGPNRNNMSPHGIPARSSGS) form a disordered region. Residue Ser-449 is modified to Phosphoserine. Residue Lys-509 forms a Glycyl lysine isopeptide (Lys-Gly) (interchain with G-Cter in SUMO2 and SUMO3) linkage. At Ser-522 the chain carries Phosphoserine. Residues 542-552 (ETHPRPPKPDP) show a composition bias toward basic and acidic residues. A disordered region spans residues 542 to 590 (ETHPRPPKPDPVKSSSSVLSSLTPAKSAPVINNGSPTILGKRSYEQHNG). Positions 545–552 (PRPPKPDP) match the SH3-binding motif. Lys-549 participates in a covalent cross-link: Glycyl lysine isopeptide (Lys-Gly) (interchain with G-Cter in SUMO2). Over residues 553–565 (VKSSSSVLSSLTP) the composition is skewed to low complexity. A Phosphothreonine modification is found at Thr-564. Position 576 is a phosphoserine (Ser-576). Phosphothreonine is present on Thr-578. Lys-626 bears the N6-acetyllysine; alternate mark. Lys-626 participates in a covalent cross-link: Glycyl lysine isopeptide (Lys-Gly) (interchain with G-Cter in ubiquitin); alternate. Position 639 is a phosphoserine (Ser-639). Residues 656 to 686 (DVFYMATEETRKIRKLLSSSETKRAARRPYK) are interaction with RBBP4. The interval 673–715 (SSSETKRAARRPYKPIALRQSQALPLRPPPPAPVNDEPIVIED) is disordered. An SH3-binding motif is present at residues 696 to 705 (LPLRPPPPAP). The SUMO interaction motif 1 (SIM); crucial for efficient sumoylation motif lies at 711–715 (IVIED).

It belongs to the metastasis-associated protein family. Component of the nucleosome remodeling and deacetylase (NuRD) repressor complex, composed of core proteins MTA1, MTA2, MTA3, RBBP4, RBBP7, HDAC1, HDAC2, MBD2, MBD3, and peripherally associated proteins CDK2AP1, CDK2AP2, GATAD2A, GATAD2B, CHD3, CHD4 and CHD5. The exact stoichiometry of the NuRD complex is unknown, and some subunits such as MBD2 and MBD3, GATAD2A and GATAD2B, and CHD3, CHD4 and CHD5 define mutually exclusive NuRD complexes. Interacts with RBBP4; the interaction is direct. Interacts with BMAL1. Interacts with CLOCK. Interacts with COP1. Interacts with CSNK1G2 in the cytoplasm. Interacts with EP300. Interacts with HDAC2. Interacts with ITGB3BP/CENPR. Interacts with MBD3L2. Interacts with MDM2. Interacts with NACC2. Interacts with p53/TP53. Interacts with PIAS1. Interacts with PIAS3. Interacts with PIAS4. Interacts with PWWP2A. Interacts with PWWP2B. Interacts with SENP1. Interacts with SENP2. Interacts with SIX3; facilitates the binding of SIX3 to the core DNA motif of SIX3 promoter. Interacts with SUMO1. Interacts with SUMO2. Interacts with TFCP2L1; which is indispensable for TFCP2L1-mediated self-renewal-promoting effect and endoderm-inhibiting action. Interacts with TFAP2C. Interacts with TPR. Interacts with UBE2I/UBC9. In terms of processing, phosphorylation by CSNK1G2/CK1 triggered by estrogen enhances corepression of estrogen receptor (ER). Post-translationally, acetylation is essential for its transcriptional coactivator activity. Sumoylation positively regulates its transcriptional corepressor activity but does not affect the protein stability. Sumoylated preferentially by SUMO2 or SUMO3 than SUMO1. Sumoylation is enhanced by PIAS1/3/4 and preferentially sumoylated by SUMO2 in the presence of PIAS1/3/4. Desumoylated by SENP1. In terms of processing, ubiquitinated by COP1, which leads to proteasomal degradation. As to expression, widely expressed but not in skeletal muscle. Highly expressed in the brain, liver, kidney and cardiac muscle and in mammary tumors.

The protein localises to the nucleus. It localises to the nucleus envelope. Its subcellular location is the cytoplasm. The protein resides in the cytoskeleton. In terms of biological role, transcriptional coregulator which can act as both a transcriptional corepressor and coactivator. Acts as a component of the histone deacetylase NuRD complex which participates in the remodeling of chromatin. In the NuRD complex, regulates transcription of its targets by modifying the acetylation status of the target chromatin and cofactor accessibility to the target DNA. In conjunction with other components of NuRD, acts as a transcriptional corepressor of BRCA1, ESR1, TFF1 and CDKN1A. Acts as a transcriptional coactivator of BCAS3, PAX5 and SUMO2, independent of the NuRD complex. Stimulates the expression of WNT1 by inhibiting the expression of its transcriptional corepressor SIX3. Regulates p53-dependent and -independent DNA repair processes following genotoxic stress. Regulates the stability and function of p53/TP53 by inhibiting its ubiquitination by COP1 and MDM2 thereby regulating the p53-dependent DNA repair. Plays a role in the regulation of the circadian clock and is essential for the generation and maintenance of circadian rhythms under constant light and for normal entrainment of behavior to light-dark (LD) cycles. Positively regulates the CLOCK-BMAL1 heterodimer mediated transcriptional activation of its own transcription and the transcription of CRY1. Regulates deacetylation of BMAL1 by regulating SIRT1 expression, resulting in derepressing CRY1-mediated transcription repression. With Tfcp2l1, promotes establishment and maintenance of pluripotency in embryonic stem cells (ESCs) and inhibits endoderm differentiation. In Mus musculus (Mouse), this protein is Metastasis-associated protein MTA1 (Mta1).